We begin with the raw amino-acid sequence, 202 residues long: Small ribosomal subunit protein uS4c (202 aa).

Residues 90–158 form the S4 RNA-binding domain; that stretch reads MRSDNVIFRL…ISKNIELYQK (69 aa).

Belongs to the universal ribosomal protein uS4 family. As to quaternary structure, part of the 30S ribosomal subunit. Contacts protein S5. The interaction surface between S4 and S5 is involved in control of translational fidelity.

It is found in the plastid. It localises to the chloroplast. In terms of biological role, one of the primary rRNA binding proteins, it binds directly to 16S rRNA where it nucleates assembly of the body of the 30S subunit. Functionally, with S5 and S12 plays an important role in translational accuracy. In Anthoceros punctatus (Hornwort), this protein is Small ribosomal subunit protein uS4c (rps4).